Here is a 157-residue protein sequence, read N- to C-terminus: Ubiquitin-like protein 4A (157 aa).

In terms of domain architecture, Ubiquitin-like spans 1–76; that stretch reads MQLTVKALQG…LNLVVKPLEK (76 aa). Residue Lys-48 forms a Glycyl lysine isopeptide (Lys-Gly) (interchain with G-Cter in ubiquitin) linkage. A Phosphoserine modification is found at Ser-90. The required and sufficient for interaction with BAG6 stretch occupies residues 96-138; it reads WQLISKVLARHFSAADASRVLEQLQRDYERSLSRLTLDDIERL.

As to quaternary structure, component of the BAG6/BAT3 complex, at least composed of BAG6, UBL4A and GET4/TRC35. Interacts with BAG6; the interaction is direct and required for UBL4A protein stability. Interacts with USP13; may be indirect via BAG6. Post-translationally, polyubiquitinated. Ubiquitination by AMFR and deubiquitination by USP13 may regulate the interaction between the BAG6/BAT3 complex and SGTA and therefore may regulate client proteins fate.

The protein localises to the cytoplasm. It localises to the cytosol. The protein resides in the nucleus. Functionally, as part of a cytosolic protein quality control complex, the BAG6/BAT3 complex, maintains misfolded and hydrophobic patches-containing proteins in a soluble state and participates in their proper delivery to the endoplasmic reticulum or alternatively can promote their sorting to the proteasome where they undergo degradation. The BAG6/BAT3 complex is involved in the post-translational delivery of tail-anchored/type II transmembrane proteins to the endoplasmic reticulum membrane. Recruited to ribosomes, it interacts with the transmembrane region of newly synthesized tail-anchored proteins and together with SGTA and ASNA1 mediates their delivery to the endoplasmic reticulum. Client proteins that cannot be properly delivered to the endoplasmic reticulum are ubiquitinated and sorted to the proteasome. Similarly, the BAG6/BAT3 complex also functions as a sorting platform for proteins of the secretory pathway that are mislocalized to the cytosol either delivering them to the proteasome for degradation or to the endoplasmic reticulum. The BAG6/BAT3 complex also plays a role in the endoplasmic reticulum-associated degradation (ERAD), a quality control mechanism that eliminates unwanted proteins of the endoplasmic reticulum through their retrotranslocation to the cytosol and their targeting to the proteasome. It maintains these retrotranslocated proteins in an unfolded yet soluble state condition in the cytosol to ensure their proper delivery to the proteasome. This is Ubiquitin-like protein 4A from Homo sapiens (Human).